Here is a 155-residue protein sequence, read N- to C-terminus: Small ribosomal subunit protein uS7c (155 aa).

It belongs to the universal ribosomal protein uS7 family. As to quaternary structure, part of the 30S ribosomal subunit.

The protein localises to the plastid. Its subcellular location is the chloroplast. Its function is as follows. One of the primary rRNA binding proteins, it binds directly to 16S rRNA where it nucleates assembly of the head domain of the 30S subunit. The polypeptide is Small ribosomal subunit protein uS7c (rps7) (Cabomba caroliniana (Carolina fanwort)).